The sequence spans 94 residues: Protein S100-A1 (94 aa).

EF-hand domains lie at 13-48 (INVF…FLDV) and 50-85 (KDAD…LTVA). 7 residues coordinate Ca(2+): lysine 28, glutamate 33, aspartate 63, asparagine 65, aspartate 67, glutamate 69, and glutamate 74. Cysteine 86 is subject to S-nitrosocysteine.

It belongs to the S-100 family. As to quaternary structure, dimer of either two alpha chains, or two beta chains, or one alpha and one beta chain. Also forms heterodimers with S100P. Interacts with AGER. Interacts with CAPZA1. Interacts with FKBP4. Interacts with RYR1 and RYR2. Interacts with CACYBP in a calcium-dependent manner. Interacts with PPP5C (via TPR repeats); the interaction is calcium-dependent and modulates PPP5C activity. Interacts with ATP2A2 and PLN in a Ca(2+)-dependent manner. Interacts with mitochondrial F1-ATPase subunits ATP5F1A and ATP5F1B; these interactions increase F1-ATPase activity. Post-translationally, glutathionylated; glutathionylation increases affinity to calcium about 10-fold. In terms of tissue distribution, expressed in the cardiac and the skeletal muscles.

The protein resides in the cytoplasm. It localises to the sarcoplasmic reticulum. Its subcellular location is the mitochondrion. In terms of biological role, small calcium binding protein that plays important roles in several biological processes such as Ca(2+) homeostasis, chondrocyte biology and cardiomyocyte regulation. In response to an increase in intracellular Ca(2+) levels, binds calcium which triggers conformational changes. These changes allow interactions with specific target proteins and modulate their activity. Regulates a network in cardiomyocytes controlling sarcoplasmic reticulum Ca(2+) cycling and mitochondrial function through interaction with the ryanodine receptors RYR1 and RYR2, sarcoplasmic reticulum Ca(2+)-ATPase/ATP2A2 and mitochondrial F1-ATPase. Facilitates diastolic Ca(2+) dissociation and myofilament mechanics in order to improve relaxation during diastole. The chain is Protein S100-A1 (S100a1) from Mus musculus (Mouse).